We begin with the raw amino-acid sequence, 173 residues long: Large ribosomal subunit protein uL10 (173 aa).

The protein belongs to the universal ribosomal protein uL10 family. Part of the ribosomal stalk of the 50S ribosomal subunit. The N-terminus interacts with L11 and the large rRNA to form the base of the stalk. The C-terminus forms an elongated spine to which L12 dimers bind in a sequential fashion forming a multimeric L10(L12)X complex.

Functionally, forms part of the ribosomal stalk, playing a central role in the interaction of the ribosome with GTP-bound translation factors. This Oleidesulfovibrio alaskensis (strain ATCC BAA-1058 / DSM 17464 / G20) (Desulfovibrio alaskensis) protein is Large ribosomal subunit protein uL10.